The following is a 245-amino-acid chain: 1-(5-phosphoribosyl)-5-[(5-phosphoribosylamino)methylideneamino] imidazole-4-carboxamide isomerase 1 (245 aa).

The active-site Proton acceptor is aspartate 7. Aspartate 129 serves as the catalytic Proton donor.

The protein belongs to the HisA/HisF family.

It localises to the cytoplasm. It carries out the reaction 1-(5-phospho-beta-D-ribosyl)-5-[(5-phospho-beta-D-ribosylamino)methylideneamino]imidazole-4-carboxamide = 5-[(5-phospho-1-deoxy-D-ribulos-1-ylimino)methylamino]-1-(5-phospho-beta-D-ribosyl)imidazole-4-carboxamide. The protein operates within amino-acid biosynthesis; L-histidine biosynthesis; L-histidine from 5-phospho-alpha-D-ribose 1-diphosphate: step 4/9. This is 1-(5-phosphoribosyl)-5-[(5-phosphoribosylamino)methylideneamino] imidazole-4-carboxamide isomerase 1 (hisA1) from Photorhabdus laumondii subsp. laumondii (strain DSM 15139 / CIP 105565 / TT01) (Photorhabdus luminescens subsp. laumondii).